The sequence spans 352 residues: Quinolinate synthase (352 aa).

Iminosuccinate-binding residues include H48 and S69. Residue C114 coordinates [4Fe-4S] cluster. Iminosuccinate is bound by residues 140-142 and S157; that span reads YAN. C201 lines the [4Fe-4S] cluster pocket. Residues 227–229 and T244 each bind iminosuccinate; that span reads HPE. A [4Fe-4S] cluster-binding site is contributed by C298.

The protein belongs to the quinolinate synthase family. Type 1 subfamily. It depends on [4Fe-4S] cluster as a cofactor.

It localises to the cytoplasm. The catalysed reaction is iminosuccinate + dihydroxyacetone phosphate = quinolinate + phosphate + 2 H2O + H(+). The protein operates within cofactor biosynthesis; NAD(+) biosynthesis; quinolinate from iminoaspartate: step 1/1. Functionally, catalyzes the condensation of iminoaspartate with dihydroxyacetone phosphate to form quinolinate. This is Quinolinate synthase from Pseudomonas aeruginosa (strain UCBPP-PA14).